A 477-amino-acid polypeptide reads, in one-letter code: Bifunctional enzyme PyrF/PyrE (477 aa).

Residues 1–273 are OMP decarboxylase; sequence MIFFDKLHQN…ITVRDVASCS (273 aa). The active-site Proton donor is K96. Residues 274 to 477 form an orotate phosphoribosyltransferase region; sequence VWLPDVFTVK…DEQFLALTAE (204 aa). 5-phospho-alpha-D-ribose 1-diphosphate contacts are provided by residues R374, K375, K378, H380, and 400-408; that span reads DDILISGKS.

The protein in the N-terminal section; belongs to the OMP decarboxylase family. Type 2 subfamily. This sequence in the C-terminal section; belongs to the purine/pyrimidine phosphoribosyltransferase family. It depends on Mg(2+) as a cofactor.

The enzyme catalyses orotidine 5'-phosphate + H(+) = UMP + CO2. It catalyses the reaction orotidine 5'-phosphate + diphosphate = orotate + 5-phospho-alpha-D-ribose 1-diphosphate. The protein operates within pyrimidine metabolism; UMP biosynthesis via de novo pathway; UMP from orotate: step 1/2. Its pathway is pyrimidine metabolism; UMP biosynthesis via de novo pathway; UMP from orotate: step 2/2. Its function is as follows. Catalyzes the transfer of a ribosyl phosphate group from 5-phosphoribose 1-diphosphate to orotate, leading to the formation of orotidine monophosphate (OMP). In terms of biological role, catalyzes the decarboxylation of orotidine monophosphate (OMP) to uridine monophosphate (UMP). This Nostoc sp. (strain PCC 7120 / SAG 25.82 / UTEX 2576) protein is Bifunctional enzyme PyrF/PyrE (pyrFE).